Reading from the N-terminus, the 169-residue chain is Regulator of sigma D (169 aa).

It belongs to the Rsd/AlgQ family. Interacts with RpoD.

The protein localises to the cytoplasm. In terms of biological role, binds RpoD and negatively regulates RpoD-mediated transcription activation by preventing the interaction between the primary sigma factor RpoD with the catalytic core of the RNA polymerase and with promoter DNA. May be involved in replacement of the RNA polymerase sigma subunit from RpoD to RpoS during the transition from exponential growth to the stationary phase. The protein is Regulator of sigma D of Yersinia pestis.